A 96-amino-acid chain; its full sequence is UPF0251 protein VPA0321 (96 aa).

Belongs to the UPF0251 family.

This chain is UPF0251 protein VPA0321, found in Vibrio parahaemolyticus serotype O3:K6 (strain RIMD 2210633).